We begin with the raw amino-acid sequence, 763 residues long: Nibrin (763 aa).

Positions 22–81 (YVVGRKNCAILIPEDQSISRCHATLSVSHPSANLGQTNAASVLSIKDSSKYGTTVNGDKM) constitute an FHA domain. BRCT domains lie at 102–179 (SKYR…CELL) and 215–324 (KRKS…NPRR). Disordered stretches follow at residues 389–496 (VKET…SSQT), 535–593 (SKAA…SEIE), and 738–763 (QTQQ…KRRR). Residues 423 to 433 (LFREDETDTRK) are compositionally biased toward basic and acidic residues. A compositionally biased stretch (polar residues) spans 434–443 (NTPSLLPTKS). The Nuclear localization signal motif lies at 469–474 (AKKRDR). A compositionally biased stretch (basic and acidic residues) spans 473–482 (DRAEDEKEAS). Residues 742 to 752 (VREESLAEDLF) show a composition bias toward basic and acidic residues. The FxF/Y motif motif lies at 748–757 (AEDLFRYNPK).

This sequence belongs to the Nibrin family. Component of the MRN complex composed of two heterodimers rad50 and mre11 associated with a single nbn.

The protein localises to the nucleus. The protein resides in the chromosome. It is found in the PML body. Its subcellular location is the telomere. Its function is as follows. Component of the MRN complex, which plays a central role in double-strand break (DSB) repair, DNA recombination, maintenance of telomere integrity and meiosis. The MRN complex is involved in the repair of DNA double-strand breaks (DSBs) via homologous recombination (HR), an error-free mechanism which primarily occurs during S and G2 phases. The complex (1) mediates the end resection of damaged DNA, which generates proper single-stranded DNA, a key initial steps in HR, and is (2) required for the recruitment of other repair factors and efficient activation of ATM and ATR upon DNA damage. The MRN complex possesses single-strand endonuclease activity and double-strand-specific 3'-5' exonuclease activity, which are provided by MRE11, to initiate end resection, which is required for single-strand invasion and recombination. Within the MRN complex, nbn acts as a protein-protein adapter, which specifically recognizes and binds phosphorylated proteins, promoting their recruitment to DNA damage sites. Recruits mre11 and rad50 components of the MRN complex to DSBs in response to DNA damage. Promotes the recruitment of PI3/PI4-kinase family members atm, atr, and probably DNA-PKcs to the DNA damage sites, activating their functions. Mediates the recruitment of phosphorylated rbbp8/CtIP to DSBs, leading to cooperation between the MRN complex and rbbp8/CtIP to initiate end resection. The MRN complex promotes recruitment of topbp1 to DNA damage sites. The MRN complex and rbbp8/CtIP are also required for chromosome alignment during metaphase. The chain is Nibrin from Xenopus laevis (African clawed frog).